Here is a 504-residue protein sequence, read N- to C-terminus: Amphoterin-induced protein 3 (504 aa).

A signal peptide spans 1–19; it reads MTWLVLLGTLLCMLRVGLG. The Extracellular portion of the chain corresponds to 20 to 383; sequence TPDSEGFPPR…PRPEPEAFNT (364 aa). Positions 25–61 constitute an LRRNT domain; sequence GFPPRALHNCPYKCICAADLLSCTGLGLQDVPAELPA. Intrachain disulfides connect Cys34/Cys40 and Cys38/Cys47. LRR repeat units follow at residues 62–83, 86–107, 110–133, 134–155, 158–178, and 184–207; these read ATAD…WLAP, QLRA…VFVN, GLRL…DGLG, ALEK…AFHG, ALSH…DHLH, and HLLT…AALP. N-linked (GlcNAc...) asparagine glycosylation is present at Asn107. Residues 219-275 form the LRRCT domain; it reads NPLPCDCRLYHLLQRWHQRGLSAVRDFAREYVCLAFKVPASRVRFFQHSRVFENCSS. Intrachain disulfides connect Cys223/Cys251, Cys225/Cys273, and Cys300/Cys352. N-linked (GlcNAc...) asparagine glycosylation is found at Asn272, Asn301, Asn362, and Asn368. The Ig-like C2-type domain occupies 277–370; the sequence is PALGLERPEE…HNQTHEYNVS (94 aa). The helical transmembrane segment at 384–404 threads the bilayer; that stretch reads GFTTLLGCAVGLVLVLLYLFA. At 405 to 504 the chain is on the cytoplasmic side; that stretch reads PPCRCCRRAC…SIGSEGPMTT (100 aa). The disordered stretch occupies residues 422 to 448; the sequence is TPSPLQELSAQSSVLSTTPPDAPSRKA. Residues 424 to 440 show a composition bias toward polar residues; that stretch reads SPLQELSAQSSVLSTTP.

Belongs to the immunoglobulin superfamily. AMIGO family. In terms of assembly, binds AMIGO1 or AMIGO2.

The protein resides in the membrane. May mediate heterophilic cell-cell interaction. May contribute to signal transduction through its intracellular domain. The polypeptide is Amphoterin-induced protein 3 (Homo sapiens (Human)).